Consider the following 151-residue polypeptide: S-protein homolog 74 (151 aa).

The first 25 residues, 1 to 25 (MNYIKQFILAICFYLVLTCQDHVLA), serve as a signal peptide directing secretion.

This sequence belongs to the plant self-incompatibility (S1) protein family.

It is found in the secreted. This chain is S-protein homolog 74, found in Arabidopsis thaliana (Mouse-ear cress).